Here is a 526-residue protein sequence, read N- to C-terminus: Probable 1,4-alpha-glucan branching enzyme MT3115 (526 aa).

Glu-205 acts as the Nucleophile in catalysis. Residues Arg-251 and Gly-268 each coordinate substrate. Asp-344 (proton donor) is an active-site residue. Substrate-binding residues include Trp-396 and Asp-462.

It belongs to the glycosyl hydrolase 57 family.

The catalysed reaction is Transfers a segment of a (1-&gt;4)-alpha-D-glucan chain to a primary hydroxy group in a similar glucan chain.. Its function is as follows. Catalyzes the formation of branch points in alpha-glucans by cleavage of an alpha-1,4 glycosidic bond and subsequent transfer of the cleaved-off oligosaccharide to a new alpha-1,6 position. Is probably involved in the biosynthesis of 6-O-methylglucosyl lipopolysaccharides (MGLP). This chain is Probable 1,4-alpha-glucan branching enzyme MT3115, found in Mycobacterium tuberculosis (strain CDC 1551 / Oshkosh).